Reading from the N-terminus, the 504-residue chain is Taurochenodeoxycholic 6 alpha-hydroxylase (504 aa).

Transmembrane regions (helical) follow at residues 6-26 (LASV…LLLL) and 110-130 (APVL…LLNG). C451 contributes to the heme binding site.

The protein belongs to the cytochrome P450 family. Requires heme as cofactor. In terms of tissue distribution, primarily expressed in liver. Low expression in kidney.

The protein localises to the endoplasmic reticulum membrane. It carries out the reaction taurochenodeoxycholate + reduced [NADPH--hemoprotein reductase] + O2 = taurohyocholate + oxidized [NADPH--hemoprotein reductase] + H2O + H(+). The catalysed reaction is lithocholate + reduced [NADPH--hemoprotein reductase] + O2 = hyodeoxycholate + oxidized [NADPH--hemoprotein reductase] + H2O + H(+). In terms of biological role, catalyzes the 6 alpha hydroxylation oxidation of taurodeoxycholate to produce the pig specific bile acid taurohyocholic acid. In Sus scrofa (Pig), this protein is Taurochenodeoxycholic 6 alpha-hydroxylase (CYP4A21).